A 91-amino-acid polypeptide reads, in one-letter code: Small ribosomal subunit protein uS15 (91 aa).

It belongs to the universal ribosomal protein uS15 family. Part of the 30S ribosomal subunit. Forms a bridge to the 50S subunit in the 70S ribosome, contacting the 23S rRNA.

In terms of biological role, one of the primary rRNA binding proteins, it binds directly to 16S rRNA where it helps nucleate assembly of the platform of the 30S subunit by binding and bridging several RNA helices of the 16S rRNA. Functionally, forms an intersubunit bridge (bridge B4) with the 23S rRNA of the 50S subunit in the ribosome. This chain is Small ribosomal subunit protein uS15, found in Deinococcus radiodurans (strain ATCC 13939 / DSM 20539 / JCM 16871 / CCUG 27074 / LMG 4051 / NBRC 15346 / NCIMB 9279 / VKM B-1422 / R1).